Here is a 558-residue protein sequence, read N- to C-terminus: CTP synthase (558 aa).

Residues 1–267 (MTKFVFVTGG…AQQTLELLNL (267 aa)) form an amidoligase domain region. Ser-13 serves as a coordination point for CTP. Residue Ser-13 coordinates UTP. ATP is bound by residues 14 to 19 (SIGKGI) and Asp-71. Mg(2+)-binding residues include Asp-71 and Glu-141. CTP is bound by residues 148–150 (DIE), 188–193 (KTKPTQ), and Lys-224. UTP-binding positions include 188–193 (KTKPTQ) and Lys-224. The region spanning 292-534 (EVALVGKYVQ…VKASVDYNHV (243 aa)) is the Glutamine amidotransferase type-1 domain. Gly-354 is an L-glutamine binding site. The Nucleophile; for glutamine hydrolysis role is filled by Cys-381. L-glutamine-binding positions include 382–385 (MGMQ), Glu-405, and Arg-462. Catalysis depends on residues His-507 and Glu-509.

The protein belongs to the CTP synthase family. In terms of assembly, homotetramer.

The catalysed reaction is UTP + L-glutamine + ATP + H2O = CTP + L-glutamate + ADP + phosphate + 2 H(+). It catalyses the reaction L-glutamine + H2O = L-glutamate + NH4(+). It carries out the reaction UTP + NH4(+) + ATP = CTP + ADP + phosphate + 2 H(+). It participates in pyrimidine metabolism; CTP biosynthesis via de novo pathway; CTP from UDP: step 2/2. With respect to regulation, allosterically activated by GTP, when glutamine is the substrate; GTP has no effect on the reaction when ammonia is the substrate. The allosteric effector GTP functions by stabilizing the protein conformation that binds the tetrahedral intermediate(s) formed during glutamine hydrolysis. Inhibited by the product CTP, via allosteric rather than competitive inhibition. Catalyzes the ATP-dependent amination of UTP to CTP with either L-glutamine or ammonia as the source of nitrogen. Regulates intracellular CTP levels through interactions with the four ribonucleotide triphosphates. The protein is CTP synthase of Gloeothece citriformis (strain PCC 7424) (Cyanothece sp. (strain PCC 7424)).